The chain runs to 68 residues: Large ribosomal subunit protein bL33c (68 aa).

Belongs to the bacterial ribosomal protein bL33 family.

The protein localises to the plastid. Its subcellular location is the chloroplast. In Lactuca sativa (Garden lettuce), this protein is Large ribosomal subunit protein bL33c.